The chain runs to 73 residues: Guanine nucleotide-binding protein G(I)/G(S)/G(O) subunit gamma-11 (73 aa).

The tract at residues 54-73 is disordered; sequence VKGIPEDKNPFKEKGSCIIS. Position 70 is a cysteine methyl ester (Cys-70). The S-farnesyl cysteine moiety is linked to residue Cys-70. Residues 71–73 constitute a propeptide, removed in mature form; it reads IIS.

This sequence belongs to the G protein gamma family. As to quaternary structure, g proteins are composed of 3 units, alpha, beta and gamma. Interacts with beta-1 and beta-3, but not with beta-2.

It is found in the cell membrane. In terms of biological role, guanine nucleotide-binding proteins (G proteins) are involved as a modulator or transducer in various transmembrane signaling systems. The beta and gamma chains are required for the GTPase activity, for replacement of GDP by GTP, and for G protein-effector interaction. In Bos taurus (Bovine), this protein is Guanine nucleotide-binding protein G(I)/G(S)/G(O) subunit gamma-11 (GNG11).